Here is a 268-residue protein sequence, read N- to C-terminus: Serine/arginine-rich splicing factor SR30 (268 aa).

RRM domains are found at residues 7 to 82 (RTIY…IAHG) and 109 to 187 (YRVL…EYES). Residues 186 to 199 (ESRSVSRSPDDSKS) are compositionally biased toward basic and acidic residues. The segment at 186 to 268 (ESRSVSRSPD…NSPVSPVISG (83 aa)) is disordered. Phosphoserine occurs at positions 193, 210, 212, 214, 219, 221, 227, 236, 246, 256, and 260. Positions 207 to 247 (RGPSCSYSSKSRSVSPARSISPRSRPLSRSRSLYSSVSRSQ) are enriched in low complexity. Positions 257–268 (RSNSPVSPVISG) are enriched in low complexity.

Belongs to the splicing factor SR family. SR subfamily. In terms of assembly, component of the spliceosome. Interacts with SNRNP35, CYP59 and CYP63. In terms of processing, phosphorylated. In terms of tissue distribution, ubiquitous.

It is found in the nucleus speckle. It localises to the nucleus. Its subcellular location is the nucleoplasm. The protein resides in the cytoplasm. Its function is as follows. Regulatory splicing factor that modulates alternative splicing and gene expression in specific cell types. Autoregulates its own expression. Probably involved in intron recognition and spliceosome assembly. The sequence is that of Serine/arginine-rich splicing factor SR30 (SR30) from Arabidopsis thaliana (Mouse-ear cress).